Consider the following 182-residue polypeptide: Ribosome-recycling factor (182 aa).

The disordered stretch occupies residues 136–158 (IKKQEKEGDLSEDQSRDEQDQVQ).

The protein belongs to the RRF family.

It is found in the cytoplasm. In terms of biological role, responsible for the release of ribosomes from messenger RNA at the termination of protein biosynthesis. May increase the efficiency of translation by recycling ribosomes from one round of translation to another. This chain is Ribosome-recycling factor, found in Synechococcus sp. (strain CC9311).